A 41-amino-acid chain; its full sequence is Ostricacin-2 (41 aa).

Intrachain disulfides connect C8–C36, C15–C30, and C20–C37.

Its subcellular location is the secreted. Has antibacterial activity against the Gram-positive bacterium S.aureus 1056 MRSA (MIC=1.25 ug/ml) and the Gram-negative bacterium E.coli O157:H7 (MIC=0.96 ug/ml). Has antifungal activity against the yeast C.albicans 3153A (MIC=6.20 ug/ml). The sequence is that of Ostricacin-2 from Struthio camelus (Common ostrich).